The chain runs to 430 residues: UDP-N-acetylglucosamine 1-carboxyvinyltransferase (430 aa).

22–23 (KN) lines the phosphoenolpyruvate pocket. R102 serves as a coordination point for UDP-N-acetyl-alpha-D-glucosamine. C126 serves as the catalytic Proton donor. Position 126 is a 2-(S-cysteinyl)pyruvic acid O-phosphothioketal (C126). UDP-N-acetyl-alpha-D-glucosamine contacts are provided by residues 131–135 (RPVDL), 172–175 (KVSV), D317, and I339.

Belongs to the EPSP synthase family. MurA subfamily.

The protein localises to the cytoplasm. The enzyme catalyses phosphoenolpyruvate + UDP-N-acetyl-alpha-D-glucosamine = UDP-N-acetyl-3-O-(1-carboxyvinyl)-alpha-D-glucosamine + phosphate. It participates in cell wall biogenesis; peptidoglycan biosynthesis. In terms of biological role, cell wall formation. Adds enolpyruvyl to UDP-N-acetylglucosamine. In Sinorhizobium fredii (strain NBRC 101917 / NGR234), this protein is UDP-N-acetylglucosamine 1-carboxyvinyltransferase.